The following is a 551-amino-acid chain: Interleukin-2 receptor subunit beta (551 aa).

Residues 1 to 26 form the signal peptide; that stretch reads MATLALSWCLPLLILLLPLATSSASA. Topologically, residues 27-240 are extracellular; it reads AVNGTSRFTC…TKPAALGKDT (214 aa). 3 N-linked (GlcNAc...) asparagine glycosylation sites follow: Asn29, Asn43, and Asn71. A disulfide bridge connects residues Cys36 and Cys46. Cysteines 74 and 86 form a disulfide. In terms of domain architecture, Fibronectin type-III spans 134–234; sequence APISLQVVHV…QPLAFRTKPA (101 aa). An N-linked (GlcNAc...) asparagine glycan is attached at Asn149. Residues 220-224 carry the WSXWS motif motif; it reads WSPWS. A helical membrane pass occupies residues 241–265; that stretch reads IPWLGHLLVGLSGAFGFIILVYLLI. Residues 266 to 551 lie on the Cytoplasmic side of the membrane; the sequence is NCRNTGPWLK…LQDQDPTHLV (286 aa). The Box 1 motif motif lies at 278–286; it reads LKCHTPDPS. Disordered stretches follow at residues 389 to 417, 430 to 484, and 496 to 517; these read EEEPDEGGADAPTGSSPQPLRPLSAEDDA, FSPS…DLVD, and AGEQVPDPGPREPFSFPWARPP.

This sequence belongs to the type I cytokine receptor family. Type 4 subfamily. In terms of assembly, non-covalent dimer of an alpha and a beta subunit. IL2R exists in 3 different forms: a high affinity dimer, an intermediate affinity monomer (beta subunit), and a low affinity monomer (alpha subunit). The high and intermediate affinity forms also associate with a gamma subunit. Interacts with SHB upon interleukin stimulation.

The protein localises to the cell membrane. Its subcellular location is the cell surface. Receptor for interleukin-2. This beta subunit is involved in receptor mediated endocytosis and transduces the mitogenic signals of IL2. Probably in association with IL15RA, involved in the stimulation of neutrophil phagocytosis by IL15. The sequence is that of Interleukin-2 receptor subunit beta (IL2RB) from Macaca fascicularis (Crab-eating macaque).